A 339-amino-acid chain; its full sequence is 4-hydroxy-2-oxovalerate aldolase 3 (339 aa).

The Pyruvate carboxyltransferase domain occupies 7 to 259 (IRVTDTSLRD…KTGIDFFAIA (253 aa)). A substrate-binding site is contributed by 15–16 (RD). Asp16 is a Mn(2+) binding site. The active-site Proton acceptor is the His19. The substrate site is built by Ser169 and His198. Residues His198 and His200 each contribute to the Mn(2+) site. Tyr289 contacts substrate.

The protein belongs to the 4-hydroxy-2-oxovalerate aldolase family.

It catalyses the reaction (S)-4-hydroxy-2-oxopentanoate = acetaldehyde + pyruvate. This is 4-hydroxy-2-oxovalerate aldolase 3 (hsaF) from Rhodococcus jostii (strain RHA1).